A 486-amino-acid chain; its full sequence is Cardiolipin synthase A (486 aa).

Transmembrane regions (helical) follow at residues 3 to 23 and 38 to 58; these read TVYT…IAGV and MAWL…YLAV. PLD phosphodiesterase domains are found at residues 219 to 246 and 399 to 426; these read MDLR…VDPR and EGGL…DMRS. Active-site residues include histidine 224, lysine 226, aspartate 231, histidine 404, lysine 406, and aspartate 411.

Belongs to the phospholipase D family. Cardiolipin synthase subfamily. ClsA sub-subfamily.

It is found in the cell inner membrane. It catalyses the reaction 2 a 1,2-diacyl-sn-glycero-3-phospho-(1'-sn-glycerol) = a cardiolipin + glycerol. Functionally, catalyzes the reversible phosphatidyl group transfer from one phosphatidylglycerol molecule to another to form cardiolipin (CL) (diphosphatidylglycerol) and glycerol. This Shigella dysenteriae serotype 1 (strain Sd197) protein is Cardiolipin synthase A.